A 281-amino-acid chain; its full sequence is Very long chain fatty acid elongase 7 (281 aa).

Ala-2 carries the N-acetylalanine modification. Over 2–27 the chain is Lumenal; sequence AFSDLTSRTVRFYDNWIKDADPRVED. Residues 28–48 traverse the membrane as a helical segment; that stretch reads YLLMSSPLPQTIILGLYVYFV. Residues 49-72 are Cytoplasmic-facing; that stretch reads TSLGPKLMENRKPFELKKAMITYN. Residues 73–93 form a helical membrane-spanning segment; the sequence is FFIVLFSVYMCYEFVMSGWGT. The Lumenal segment spans residues 94-115; the sequence is GYSFRCDIVDYSQSPRAMRMVH. A disulfide bridge links Cys-99 with Cys-231. A helical membrane pass occupies residues 116–136; it reads TCWLYYFSKFIELLDTIFFVL. 5 residues coordinate 3-oxoeicosanoyl-CoA: Lys-124, Arg-137, Lys-139, Gln-142, and His-147. The Cytoplasmic portion of the chain corresponds to 137-142; sequence RKKNSQ. Residues 143–162 form a helical membrane-spanning segment; it reads VTFLHVFHHTIMPWTWWFGV. The HxxHH motif motif lies at 147–151; sequence HVFHH. Residue His-150 is the Nucleophile of the active site. Residues 163-171 are Lumenal-facing; that stretch reads KFAAGGLGT. The chain crosses the membrane as a helical span at residues 172 to 194; sequence FHAFLNTAVHVVMYSYYGLCAMG. 3-oxoeicosanoyl-CoA contacts are provided by Tyr-187, Lys-204, Thr-208, and Gln-211. Residues 195-206 lie on the Cytoplasmic side of the membrane; that stretch reads PAYQKYLWWKKH. A helical transmembrane segment spans residues 207-227; it reads LTSLQLVQFVLVTIHIGQIFF. Residues 228–236 are Lumenal-facing; it reads MEDCNYQYP. Residues 237–257 form a helical membrane-spanning segment; that stretch reads VFLYIIMSYGCIFLLLFLHFW. The Cytoplasmic segment spans residues 258-281; that stretch reads YRAYTKGQRLPKTLENGNCKSKRH. Arg-266 is a 3-oxoeicosanoyl-CoA binding site. The Di-lysine motif signature appears at 277-281; the sequence is KSKRH.

This sequence belongs to the ELO family. ELOVL7 subfamily. In terms of assembly, homodimer. Interacts with TECR.

It localises to the endoplasmic reticulum membrane. It catalyses the reaction a very-long-chain acyl-CoA + malonyl-CoA + H(+) = a very-long-chain 3-oxoacyl-CoA + CO2 + CoA. The enzyme catalyses eicosanoyl-CoA + malonyl-CoA + H(+) = 3-oxodocosanoyl-CoA + CO2 + CoA. The catalysed reaction is (5Z,8Z,11Z,14Z)-eicosatetraenoyl-CoA + malonyl-CoA + H(+) = (7Z,10Z,13Z,16Z)-3-oxodocosatetraenoyl-CoA + CO2 + CoA. It carries out the reaction (6Z,9Z,12Z)-octadecatrienoyl-CoA + malonyl-CoA + H(+) = (8Z,11Z,14Z)-3-oxoeicosatrienoyl-CoA + CO2 + CoA. It catalyses the reaction (9Z,12Z)-octadecadienoyl-CoA + malonyl-CoA + H(+) = (11Z,14Z)-3-oxoicosa-11,14-dienoyl-CoA + CO2 + CoA. The enzyme catalyses (9Z)-octadecenoyl-CoA + malonyl-CoA + H(+) = 3-oxo-(11Z)-eicosenoyl-CoA + CO2 + CoA. The catalysed reaction is octadecanoyl-CoA + malonyl-CoA + H(+) = 3-oxoeicosanoyl-CoA + CO2 + CoA. It carries out the reaction hexadecanoyl-CoA + malonyl-CoA + H(+) = 3-oxooctadecanoyl-CoA + CO2 + CoA. It catalyses the reaction (9Z,12Z,15Z)-octadecatrienoyl-CoA + malonyl-CoA + H(+) = (11Z,14Z,17Z)-3-oxoeicosatrienoyl-CoA + CO2 + CoA. The protein operates within lipid metabolism; fatty acid biosynthesis. In terms of biological role, catalyzes the first and rate-limiting reaction of the four reactions that constitute the long-chain fatty acids elongation cycle. This endoplasmic reticulum-bound enzymatic process allows the addition of 2 carbons to the chain of long- and very long-chain fatty acids (VLCFAs) per cycle. Condensing enzyme with higher activity toward C18 acyl-CoAs, especially C18:3(n-3) acyl-CoAs and C18:3(n-6)-CoAs. Also active toward C20:4-, C18:0-, C18:1-, C18:2- and C16:0-CoAs, and weakly toward C20:0-CoA. Little or no activity toward C22:0-, C24:0-, or C26:0-CoAs. May participate in the production of saturated and polyunsaturated VLCFAs of different chain lengths that are involved in multiple biological processes as precursors of membrane lipids and lipid mediators. This Mus musculus (Mouse) protein is Very long chain fatty acid elongase 7.